The sequence spans 86 residues: Small ribosomal subunit protein uS17 (86 aa).

It belongs to the universal ribosomal protein uS17 family. In terms of assembly, part of the 30S ribosomal subunit.

In terms of biological role, one of the primary rRNA binding proteins, it binds specifically to the 5'-end of 16S ribosomal RNA. The sequence is that of Small ribosomal subunit protein uS17 from Shouchella clausii (strain KSM-K16) (Alkalihalobacillus clausii).